The primary structure comprises 265 residues: Leucine-rich repeat-containing protein Bf66946 (265 aa).

The signal sequence occupies residues 1–20 (MALRDIFLLSMAMTAVTVQA). Disulfide bonds link cysteine 21/cysteine 27 and cysteine 25/cysteine 39. The region spanning 21–50 (CPSACKCTVSLYGEMVVACGGMGLTEIPED) is the LRRNT domain. 3 LRR repeats span residues 51-75 (IPHR…SFKG), 76-99 (LRNL…ALRH), and 100-123 (LGHL…LFDF). Asparagine 64 carries N-linked (GlcNAc...) asparagine glycosylation. One can recognise an LRRCT domain in the interval 142–193 (NPWGCDCRMAWLAQELAGGSKTFGDRHMECATPAALAGRGLSEIPQTSFVCT). 2 cysteine pairs are disulfide-bonded: cysteine 146/cysteine 171 and cysteine 148/cysteine 192. The chain crosses the membrane as a helical span at residues 220-240 (VAVVFGCITGLVTILLLVLTA).

It is found in the cell membrane. In terms of biological role, binds selectively to the Gram-positive bacteria S.aureus and S.pneumoniae. Does not adhere to the Gram-negative bacteria E.coli and S.enterica. Probably recognizes peptidoglycans expressed on the bacterial cell surface. In Branchiostoma floridae (Florida lancelet), this protein is Leucine-rich repeat-containing protein Bf66946.